Reading from the N-terminus, the 160-residue chain is Ureidoglycolate lyase (160 aa).

The protein belongs to the ureidoglycolate lyase family. In terms of assembly, homodimer. Ni(2+) serves as cofactor.

It catalyses the reaction (S)-ureidoglycolate = urea + glyoxylate. The protein operates within nitrogen metabolism; (S)-allantoin degradation. Catalyzes the catabolism of the allantoin degradation intermediate (S)-ureidoglycolate, generating urea and glyoxylate. Involved in the utilization of allantoin as nitrogen source. This is Ureidoglycolate lyase from Salmonella agona (strain SL483).